The sequence spans 137 residues: Peptide methionine sulfoxide reductase MsrB (137 aa).

The 123-residue stretch at 9–131 folds into the MsrB domain; the sequence is DAEWRAMLDD…NSASLRFDAT (123 aa). Positions 48, 51, 97, and 100 each coordinate Zn(2+). C120 acts as the Nucleophile in catalysis.

The protein belongs to the MsrB Met sulfoxide reductase family. The cofactor is Zn(2+).

The catalysed reaction is L-methionyl-[protein] + [thioredoxin]-disulfide + H2O = L-methionyl-(R)-S-oxide-[protein] + [thioredoxin]-dithiol. The polypeptide is Peptide methionine sulfoxide reductase MsrB (Herminiimonas arsenicoxydans).